Consider the following 790-residue polypeptide: Eukaryotic translation initiation factor 3 subunit C (790 aa).

The interval 1 to 62 (MSRFFVSGYN…DGRPSGPAYF (62 aa)) is disordered. The span at 14-53 (SSEEEDLLSSEEELLTSSGEENEDSDFFNDDDESSSDEED) shows a compositional bias: acidic residues. The region spanning 556-728 (FHQHINLELL…IVFTTDSQRS (173 aa)) is the PCI domain. The tract at residues 748–790 (NEKTSSNGYAKKNQSQTQPQAQSKEVEENKFRYANVNTNTDEF) is disordered. The segment covering 751–770 (TSSNGYAKKNQSQTQPQAQS) has biased composition (polar residues).

The protein belongs to the eIF-3 subunit C family. Component of the eukaryotic translation initiation factor 3 (eIF-3) complex.

It localises to the cytoplasm. In terms of biological role, component of the eukaryotic translation initiation factor 3 (eIF-3) complex, which is involved in protein synthesis of a specialized repertoire of mRNAs and, together with other initiation factors, stimulates binding of mRNA and methionyl-tRNAi to the 40S ribosome. The eIF-3 complex specifically targets and initiates translation of a subset of mRNAs involved in cell proliferation. This chain is Eukaryotic translation initiation factor 3 subunit C, found in Lodderomyces elongisporus (strain ATCC 11503 / CBS 2605 / JCM 1781 / NBRC 1676 / NRRL YB-4239) (Yeast).